We begin with the raw amino-acid sequence, 91 residues long: MGRSLKKGPFVDGHLMKKVEALNATNDKKVVKTWSRRSTIFPDFIGHTFAVYDGRKHVPVYVSEDMVGHKLGEFAPTRTYKGHAADKKTRR.

This sequence belongs to the universal ribosomal protein uS19 family.

Protein S19 forms a complex with S13 that binds strongly to the 16S ribosomal RNA. The chain is Small ribosomal subunit protein uS19 from Shouchella clausii (strain KSM-K16) (Alkalihalobacillus clausii).